The chain runs to 291 residues: 4-hydroxy-tetrahydrodipicolinate synthase (291 aa).

A pyruvate-binding site is contributed by Thr-45. Tyr-133 acts as the Proton donor/acceptor in catalysis. Lys-161 acts as the Schiff-base intermediate with substrate in catalysis. Residue Ile-203 coordinates pyruvate.

It belongs to the DapA family. Homotetramer; dimer of dimers.

The protein localises to the cytoplasm. It catalyses the reaction L-aspartate 4-semialdehyde + pyruvate = (2S,4S)-4-hydroxy-2,3,4,5-tetrahydrodipicolinate + H2O + H(+). Its pathway is amino-acid biosynthesis; L-lysine biosynthesis via DAP pathway; (S)-tetrahydrodipicolinate from L-aspartate: step 3/4. In terms of biological role, catalyzes the condensation of (S)-aspartate-beta-semialdehyde [(S)-ASA] and pyruvate to 4-hydroxy-tetrahydrodipicolinate (HTPA). The polypeptide is 4-hydroxy-tetrahydrodipicolinate synthase (Neisseria meningitidis serogroup C / serotype 2a (strain ATCC 700532 / DSM 15464 / FAM18)).